We begin with the raw amino-acid sequence, 114 residues long: Beta-microseminoprotein (114 aa).

The N-terminal stretch at 1–20 is a signal peptide; that stretch reads MNVLLGGFVIFATFVTLCNA. Disulfide bonds link cysteine 22-cysteine 70, cysteine 38-cysteine 62, cysteine 57-cysteine 93, cysteine 60-cysteine 69, and cysteine 84-cysteine 107.

The protein belongs to the beta-microseminoprotein family. In terms of assembly, homodimer; Interacts with PI16.

It is found in the secreted. The polypeptide is Beta-microseminoprotein (MSMB) (Macaca mulatta (Rhesus macaque)).